Here is a 168-residue protein sequence, read N- to C-terminus: Siroheme decarboxylase NirH subunit (168 aa).

This sequence belongs to the Ahb/Nir family. Probably forms a complex composed of NirD, NirL, NirG and NirH. All proteins are required for the total conversion of siroheme to didecarboxysiroheme.

It catalyses the reaction siroheme + 2 H(+) = 12,18-didecarboxysiroheme + 2 CO2. It participates in porphyrin-containing compound metabolism. Involved in heme d1 biosynthesis. Catalyzes the decarboxylation of siroheme into didecarboxysiroheme. The polypeptide is Siroheme decarboxylase NirH subunit (Stutzerimonas stutzeri (Pseudomonas stutzeri)).